Reading from the N-terminus, the 383-residue chain is NIPA-like protein 2 (383 aa).

Asn23 and Asn33 each carry an N-linked (GlcNAc...) asparagine glycan. 9 helical membrane-spanning segments follow: residues 46-66, 88-108, 115-135, 144-164, 177-197, 208-228, 243-263, 278-298, and 306-326; these read IHLF…ISLN, VLWL…FAAY, LIAP…VLFL, LLGM…APNI, FVGW…CILL, IVVL…SVKA, LTYA…VFQV, VVPV…IIFY, and FLTV…VFLV. The disordered stretch occupies residues 352 to 383; the sequence is DKVQPDSNGLSYGTLPDGGDSTRGQCGEKKES.

Belongs to the NIPA family.

The protein resides in the membrane. The polypeptide is NIPA-like protein 2 (Nipal2) (Mus musculus (Mouse)).